The sequence spans 637 residues: GTP-binding protein 4 (637 aa).

A2 carries the N-acetylalanine modification. The residue at position 103 (K103) is an N6-acetyllysine; alternate. K103 participates in a covalent cross-link: Glycyl lysine isopeptide (Lys-Gly) (interchain with G-Cter in SUMO2); alternate. S122 carries the post-translational modification Phosphoserine. Residues 169-340 (RTLLLCGYPN…VKTEACDRLL (172 aa)) enclose the OBG-type G domain. GTP contacts are provided by residues 175–182 (GYPNVGKS), 221–225 (DTPGI), and 289–292 (SKCE). A Glycyl lysine isopeptide (Lys-Gly) (interchain with G-Cter in SUMO2) cross-link involves residue K332. 2 disordered regions span residues 499-518 (SKEK…KVQR) and 525-637 (MRSL…KERR). K535 is covalently cross-linked (Glycyl lysine isopeptide (Lys-Gly) (interchain with G-Cter in SUMO2)). Basic residues predominate over residues 542 to 555 (VRARRSRSVTRKRK). The residue at position 559 (S559) is a Phosphoserine. Low complexity predominate over residues 563-574 (SSIARSRSRSCS). Basic and acidic residues predominate over residues 576 to 588 (TPRDVSGLRDVKM). Basic residues predominate over residues 589-607 (VKKAKTMMKKAQKKMNRLG). A compositionally biased stretch (basic and acidic residues) spans 608–621 (KKGEADRHVFDMKP). The segment covering 622–637 (KHLLSGKRKAGKKERR) has biased composition (basic residues).

The protein belongs to the TRAFAC class OBG-HflX-like GTPase superfamily. OBG GTPase family. NOG subfamily. As to quaternary structure, associates with pre-60S ribosomal particles. Interacts with MINAS-60 (product of an alternative open reading frame of RBM10).

The protein resides in the nucleus. The protein localises to the nucleolus. Its function is as follows. Involved in the biogenesis of the 60S ribosomal subunit. Acts as TP53 repressor, preventing TP53 stabilization and cell cycle arrest. The protein is GTP-binding protein 4 (Gtpbp4) of Rattus norvegicus (Rat).